Reading from the N-terminus, the 92-residue chain is Small ribosomal subunit protein uS19 (92 aa).

This sequence belongs to the universal ribosomal protein uS19 family.

Its function is as follows. Protein S19 forms a complex with S13 that binds strongly to the 16S ribosomal RNA. The protein is Small ribosomal subunit protein uS19 of Rickettsia typhi (strain ATCC VR-144 / Wilmington).